Reading from the N-terminus, the 1065-residue chain is Outer capsid protein VP3 (1065 aa).

The protein localises to the virion. The catalysed reaction is a 5'-end diphospho-ribonucleoside in mRNA + GTP + H(+) = a 5'-end (5'-triphosphoguanosine)-ribonucleoside in mRNA + diphosphate. The enzyme catalyses a 5'-end (5'-triphosphoguanosine)-ribonucleoside in mRNA + S-adenosyl-L-methionine = a 5'-end (N(7)-methyl 5'-triphosphoguanosine)-ribonucleoside in mRNA + S-adenosyl-L-homocysteine. Outer capsid protein involved in mRNA capping. Catalyzes the last 3 enzymatic activities for formation of the 5' cap structure on the viral plus-strand transcripts, namely the RNA guanylyltransferase, RNA-7N- and RNA-2'O-methyltransferase activities. The protein is Outer capsid protein VP3 (S3) of Cryphonectria parasitica mycoreovirus 1 (strain 9B21) (CpMYRV-1).